The following is a 124-amino-acid chain: Putative peptidyl-tRNA hydrolase (124 aa).

Belongs to the PTH2 family.

It carries out the reaction an N-acyl-L-alpha-aminoacyl-tRNA + H2O = an N-acyl-L-amino acid + a tRNA + H(+). This is Putative peptidyl-tRNA hydrolase from Fowlpox virus (strain NVSL) (FPV).